Here is a 488-residue protein sequence, read N- to C-terminus: MTKNNEAGWNLDHSYTTLPQSFYTEIPPTPVSSPELVKLNHSLAISLGFHPEELKKEAEIAIFAGNALPEGAHPLAQAYAGHQFGHFNMLGDGRALLIGEQITPSGKRFDIQLKGSGPTPYSRRGDGRAALGPMLREYIISEAMYALDIPTTRSLAVVTTGEPTYRETKLPGAILTRVASSHIRVGTFQYAAARGSIEDLQSLADYTIKRHYPEIEAHENRYTALLQEVIKKQASLIAKWQLVGFIHGVMNTDNITISGETIDYGPCAFMDNYDQGTVFSSIDTQGRYAYGNQPYMAAWDLARLAESLIPILHEDEEEALKIAQDEISKFSVQYENQWFLGMKKKLGLFSNEEQDQSLIEQLLKMMEKFKADYTNTFRSLTLNTIENTALFESPEFKEWYKLWQSRLERQEESKENAYEMMKNNNPSIIPRNHRVEEALEAAVTSGDYSVMEKLLEALSNPYAYSADQEDYCAPPAPTNRPYRTFCGT.

8 residues coordinate ATP: Gly-91, Gly-93, Arg-94, Lys-114, Asp-126, Gly-127, Arg-177, and Arg-184. Asp-253 (proton acceptor) is an active-site residue. Residues Asn-254 and Asp-263 each coordinate Mg(2+). Position 263 (Asp-263) interacts with ATP.

Belongs to the SELO family. Mg(2+) serves as cofactor. The cofactor is Mn(2+).

The catalysed reaction is L-seryl-[protein] + ATP = 3-O-(5'-adenylyl)-L-seryl-[protein] + diphosphate. The enzyme catalyses L-threonyl-[protein] + ATP = 3-O-(5'-adenylyl)-L-threonyl-[protein] + diphosphate. It carries out the reaction L-tyrosyl-[protein] + ATP = O-(5'-adenylyl)-L-tyrosyl-[protein] + diphosphate. It catalyses the reaction L-histidyl-[protein] + UTP = N(tele)-(5'-uridylyl)-L-histidyl-[protein] + diphosphate. The catalysed reaction is L-seryl-[protein] + UTP = O-(5'-uridylyl)-L-seryl-[protein] + diphosphate. The enzyme catalyses L-tyrosyl-[protein] + UTP = O-(5'-uridylyl)-L-tyrosyl-[protein] + diphosphate. In terms of biological role, nucleotidyltransferase involved in the post-translational modification of proteins. It can catalyze the addition of adenosine monophosphate (AMP) or uridine monophosphate (UMP) to a protein, resulting in modifications known as AMPylation and UMPylation. This is Protein nucleotidyltransferase YdiU from Bacillus cereus (strain ZK / E33L).